The chain runs to 133 residues: MKRKHKRLLFIIVTFIIFGSSVVIVLNKLRSNISFFFTPTEVLSGSINVSSNDIRIGGMVISGSLKRYDNLISFFITDLESQIKVVYQGILPPLFSEGSWVVAKGKMVNGEFNANEILAKHDENYKPGKYRAK.

The Cytoplasmic segment spans residues 1-7 (MKRKHKR). Residues 8 to 28 (LLFIIVTFIIFGSSVVIVLNK) form a helical; Signal-anchor for type II membrane protein membrane-spanning segment. At 29–133 (LRSNISFFFT…NYKPGKYRAK (105 aa)) the chain is on the periplasmic side. Heme contacts are provided by H121 and Y125.

This sequence belongs to the CcmE/CycJ family.

It is found in the cell inner membrane. Its function is as follows. Heme chaperone required for the biogenesis of c-type cytochromes. Transiently binds heme delivered by CcmC and transfers the heme to apo-cytochromes in a process facilitated by CcmF and CcmH. The chain is Cytochrome c-type biogenesis protein CcmE from Ehrlichia canis (strain Jake).